A 95-amino-acid polypeptide reads, in one-letter code: ATP-dependent Clp protease adapter protein ClpS (95 aa).

Belongs to the ClpS family. Binds to the N-terminal domain of the chaperone ClpA.

In terms of biological role, involved in the modulation of the specificity of the ClpAP-mediated ATP-dependent protein degradation. This Synechococcus elongatus (strain ATCC 33912 / PCC 7942 / FACHB-805) (Anacystis nidulans R2) protein is ATP-dependent Clp protease adapter protein ClpS.